The following is a 428-amino-acid chain: Chaperone SurA (428 aa).

A signal peptide spans 1-20; it reads MKNWKTLLLGIAMIANTSFA. 2 consecutive PpiC domains span residues 171–272 and 282–382; these read STEL…KVND and VTEV…ELLD.

It localises to the periplasm. The enzyme catalyses [protein]-peptidylproline (omega=180) = [protein]-peptidylproline (omega=0). Chaperone involved in the correct folding and assembly of outer membrane proteins. Recognizes specific patterns of aromatic residues and the orientation of their side chains, which are found more frequently in integral outer membrane proteins. May act in both early periplasmic and late outer membrane-associated steps of protein maturation. This chain is Chaperone SurA, found in Shigella dysenteriae serotype 1 (strain Sd197).